The primary structure comprises 271 residues: Serine protease SP24D (271 aa).

Residues 1–22 form the signal peptide; it reads MTLADRVPLALAALAYLALVSG. Residues 23-49 constitute a propeptide, activation peptide; that stretch reads VRFHLSEQNDVLPGGSQARRPFFQGAR. The 220-residue stretch at 50-269 folds into the Peptidase S1 domain; it reads IVGGSVASEG…FVTWIQTTMR (220 aa). An intrachain disulfide couples C75 to C91. Residues H90 and D136 each act as charge relay system in the active site. 2 disulfide bridges follow: C199–C211 and C221–C246. S225 (charge relay system) is an active-site residue.

It belongs to the peptidase S1 family. In terms of tissue distribution, highest level of adult expression is in the thorax.

The polypeptide is Serine protease SP24D (Sp24D) (Anopheles gambiae (African malaria mosquito)).